The following is a 289-amino-acid chain: Protoheme IX farnesyltransferase 2 (289 aa).

Helical transmembrane passes span 13–33, 37–57, 86–106, 109–129, 137–157, 159–179, 207–227, 232–252, and 267–287; these read LEIT…VPGS, IYDL…ASIF, LFFI…FILL, VTSA…TIIL, IVIG…SITG, VSAT…THFW, EFWI…PLFI, VGLL…YYVA, and AFHF…LILV.

The protein belongs to the UbiA prenyltransferase family. Protoheme IX farnesyltransferase subfamily.

It is found in the cell membrane. It carries out the reaction heme b + (2E,6E)-farnesyl diphosphate + H2O = Fe(II)-heme o + diphosphate. It participates in porphyrin-containing compound metabolism; heme O biosynthesis; heme O from protoheme: step 1/1. Functionally, converts heme B (protoheme IX) to heme O by substitution of the vinyl group on carbon 2 of heme B porphyrin ring with a hydroxyethyl farnesyl side group. In Picrophilus torridus (strain ATCC 700027 / DSM 9790 / JCM 10055 / NBRC 100828 / KAW 2/3), this protein is Protoheme IX farnesyltransferase 2.